The primary structure comprises 265 residues: UPF0354 protein ABC2771 (265 aa).

It belongs to the UPF0354 family.

The polypeptide is UPF0354 protein ABC2771 (Shouchella clausii (strain KSM-K16) (Alkalihalobacillus clausii)).